The primary structure comprises 800 residues: Elongation factor G, mitochondrial (800 aa).

A mitochondrion-targeting transit peptide spans 1 to 34; that stretch reads MSVHTVMRTQVRSLAGMPKAAMRPLGNSFCARRY. One can recognise a tr-type G domain in the interval 99–385; it reads SKVRNIGIAA…GICDYLPNPA (287 aa). GTP-binding positions include 108–115, 183–187, and 237–240; these read AHIDSGKT, DTPGH, and NKMD.

Belongs to the TRAFAC class translation factor GTPase superfamily. Classic translation factor GTPase family. EF-G/EF-2 subfamily.

Its subcellular location is the mitochondrion. The protein operates within protein biosynthesis; polypeptide chain elongation. In terms of biological role, mitochondrial GTPase that catalyzes the GTP-dependent ribosomal translocation step during translation elongation. During this step, the ribosome changes from the pre-translocational (PRE) to the post-translocational (POST) state as the newly formed A-site-bound peptidyl-tRNA and P-site-bound deacylated tRNA move to the P and E sites, respectively. Catalyzes the coordinated movement of the two tRNA molecules, the mRNA and conformational changes in the ribosome. This chain is Elongation factor G, mitochondrial, found in Coccidioides immitis (strain RS) (Valley fever fungus).